The primary structure comprises 101 residues: NAD(P)H-quinone oxidoreductase subunit 4L, chloroplastic (101 aa).

The next 3 membrane-spanning stretches (helical) occupy residues 2–22 (MLEHIPVLSAYLFSIDIYGLI), 32–52 (MCLELILNAVNINFVTFSDFF), and 61–81 (IFSIFVIAIAAAEAAIGSAIV).

Belongs to the complex I subunit 4L family. NDH is composed of at least 16 different subunits, 5 of which are encoded in the nucleus.

The protein resides in the plastid. It is found in the chloroplast thylakoid membrane. The enzyme catalyses a plastoquinone + NADH + (n+1) H(+)(in) = a plastoquinol + NAD(+) + n H(+)(out). The catalysed reaction is a plastoquinone + NADPH + (n+1) H(+)(in) = a plastoquinol + NADP(+) + n H(+)(out). NDH shuttles electrons from NAD(P)H:plastoquinone, via FMN and iron-sulfur (Fe-S) centers, to quinones in the photosynthetic chain and possibly in a chloroplast respiratory chain. The immediate electron acceptor for the enzyme in this species is believed to be plastoquinone. Couples the redox reaction to proton translocation, and thus conserves the redox energy in a proton gradient. This chain is NAD(P)H-quinone oxidoreductase subunit 4L, chloroplastic, found in Gossypium barbadense (Sea Island cotton).